Consider the following 838-residue polypeptide: Ras-interacting protein RIP3 (838 aa).

Disordered stretches follow at residues 66-97 (VSTSNNNATSGNSTPPNNAISPNQQQQQQQQA), 157-290 (KPTT…TSPK), and 305-336 (NSKTLQKSDKTSEKENKQQQPDSSKTQQQQQA). Low complexity-rich tracts occupy residues 67–97 (STSNNNATSGNSTPPNNAISPNQQQQQQQQA), 157–241 (KPTT…QQKP), and 248–284 (PQNISQPQNISQQQNTNNVQQNNQQQQQQQQQQQQQQ). Residues 310-321 (QKSDKTSEKENK) show a composition bias toward basic and acidic residues. The 75-residue stretch at 441 to 515 (QLKVRVIEKA…KDEVLVLCPN (75 aa)) folds into the CRIM domain. Disordered regions lie at residues 522-581 (KSSS…QQTQ) and 594-646 (QQQQ…GPDA). Low complexity-rich tracts occupy residues 537-556 (NNNNSVNSNSSNNSNSSNNN), 563-581 (QPQQSQQQQQQTQQTQQTQ), and 594-620 (QQQQQQQQQHPQQIQQQLSSNQLQPDQ). Residues 621 to 631 (VGGGGGGGGGN) are compositionally biased toward gly residues. Positions 648–717 (LVVKITLPDS…GGADLILVSR (70 aa)) constitute an RBD domain.

Belongs to the SIN1 family. Interacts with activated RasG. Part of a complex, TORC2, consisting of tor, lst8, piaA and ripA. Additional proteins, such as 14-3-3 and heat-shock proteins, may also belong to the TORC2 complex.

Its function is as follows. Component of a Ras-regulated pathway involved in integrating chemotaxis and signal relay pathways that are essential for aggregation. This chain is Ras-interacting protein RIP3 (ripA), found in Dictyostelium discoideum (Social amoeba).